The following is a 222-amino-acid chain: Chalcone--flavanone isomerase 1 (222 aa).

Residues threonine 48, asparagine 113, and threonine 190 each coordinate substrate.

Belongs to the chalcone isomerase family.

The catalysed reaction is a chalcone = a flavanone.. It participates in secondary metabolite biosynthesis; flavonoid biosynthesis. In terms of biological role, catalyzes the intramolecular cyclization of bicyclic chalcones into tricyclic (S)-flavanones. Responsible for the isomerization of 4,2',4',6'-tetrahydroxychalcone (also termed chalcone) into naringenin. The sequence is that of Chalcone--flavanone isomerase 1 (CHI1) from Medicago sativa (Alfalfa).